The primary structure comprises 96 residues: UPF0235 protein Tola_0962 (96 aa).

The protein belongs to the UPF0235 family.

This Tolumonas auensis (strain DSM 9187 / NBRC 110442 / TA 4) protein is UPF0235 protein Tola_0962.